The chain runs to 137 residues: Large ribosomal subunit protein uL16 (137 aa).

It belongs to the universal ribosomal protein uL16 family. As to quaternary structure, part of the 50S ribosomal subunit.

In terms of biological role, binds 23S rRNA and is also seen to make contacts with the A and possibly P site tRNAs. The protein is Large ribosomal subunit protein uL16 of Streptococcus thermophilus (strain CNRZ 1066).